The primary structure comprises 545 residues: Thermosome subunit (545 aa).

Belongs to the TCP-1 chaperonin family. Forms an oligomeric complex of eight-membered rings.

Molecular chaperone; binds unfolded polypeptides in vitro, and has a weak ATPase activity. This is Thermosome subunit (ths) from Methanopyrus kandleri (strain AV19 / DSM 6324 / JCM 9639 / NBRC 100938).